The chain runs to 273 residues: 2,3,4,5-tetrahydropyridine-2,6-dicarboxylate N-succinyltransferase (273 aa).

Arg104 and Asp141 together coordinate substrate.

This sequence belongs to the transferase hexapeptide repeat family. In terms of assembly, homotrimer.

The protein resides in the cytoplasm. It catalyses the reaction (S)-2,3,4,5-tetrahydrodipicolinate + succinyl-CoA + H2O = (S)-2-succinylamino-6-oxoheptanedioate + CoA. It functions in the pathway amino-acid biosynthesis; L-lysine biosynthesis via DAP pathway; LL-2,6-diaminopimelate from (S)-tetrahydrodipicolinate (succinylase route): step 1/3. The sequence is that of 2,3,4,5-tetrahydropyridine-2,6-dicarboxylate N-succinyltransferase from Acinetobacter baylyi (strain ATCC 33305 / BD413 / ADP1).